Here is a 494-residue protein sequence, read N- to C-terminus: Glutamyl-tRNA(Gln) amidotransferase subunit A (494 aa).

Residues K81 and S156 each act as charge relay system in the active site. S180 serves as the catalytic Acyl-ester intermediate.

The protein belongs to the amidase family. GatA subfamily. In terms of assembly, heterotrimer of A, B and C subunits.

It carries out the reaction L-glutamyl-tRNA(Gln) + L-glutamine + ATP + H2O = L-glutaminyl-tRNA(Gln) + L-glutamate + ADP + phosphate + H(+). Functionally, allows the formation of correctly charged Gln-tRNA(Gln) through the transamidation of misacylated Glu-tRNA(Gln) in organisms which lack glutaminyl-tRNA synthetase. The reaction takes place in the presence of glutamine and ATP through an activated gamma-phospho-Glu-tRNA(Gln). This chain is Glutamyl-tRNA(Gln) amidotransferase subunit A, found in Mycolicibacterium gilvum (strain PYR-GCK) (Mycobacterium gilvum (strain PYR-GCK)).